A 307-amino-acid chain; its full sequence is MSAKVWVLGDAVVDLLPESDGRLLPCPGGAPANVAVGIARLGGTSGFIGRVGDDPFGALMQRTLLTEGVDITYLKQDEWHRTSTVLVDLNDQGERSFTFMVRPSADLFLETTDLPCWRHGEWLHLCSIALSAEPSRTSAFTAMTAIRHAGGFVSFDPNIREDLWQDEHLLRLCLRQALQLADVVKLSEEEWRLISGKTQNDRDICALAKEYEIAMLLVTKGAEGVVVCYRGQVHHFAGMSVNCVDSTGAGDAFVAGLLTGLSSTGLSTDEREMRRIIDLAQRCGALAVTAKGAMTALPCRQELESEK.

This sequence belongs to the carbohydrate kinase PfkB family.

The catalysed reaction is D-fructose + ATP = D-fructose 6-phosphate + ADP + H(+). The protein is Fructokinase (cscK) of Escherichia coli.